The following is a 667-amino-acid chain: MGLRFQQLKKLWLLYLFLLFFAFFMFAISINLYVASIQGGDAEMRHPKPPPKRRSLWPHKNIVAHYIGKGDIFGNMTADDYNINLFQPINGEGADGRPVVVPPRDRFRMQRFFRLNSFNLLASDRIPLNRTLKDYRTPECRDKKYASGLPSTSVIIVFHNEAWSVLLRTITSVINRSPRHLLKEIILVDDASDRSYLKRQLESYVKVLAVPTRIFRMKKRSGLVPARLLGAENARGDVLTFLDAHCECSRGWLEPLLSRIKESRKVVICPVIDIISDDNFSYTKTFENHWGAFNWQLSFRWFSSDRKRQTAGNSSKDSTDPIATPGMAGGLFAIDRKYFYEMGSYDSNMRVWGGENVEMSFRIWQCGGRVEISPCSHVGHVFRSSTPYTFPGGMSEVLTDNLARAATVWMDDWQYFIMLYTSGLTLGAKDKVNVTERVALRERLQCKPFSWYLENIWPEHFFPAPDRFFGKIIWLDGETECAQAYSKHMKNLPGRALSREWKRAFEEIDSKAEELMALIDLERDKCLRPLKEDVPRSSLSAVTVGDCTSHAQSMDMFVITPKGQIMTNDNVCLTYRQQKLGVIKMLKNRNATTSNVMLAQCASDSSQLWTYDMDTQQISHRDTKLCLTLKAATNSRLQKVEKVVLSMECDFKDITQKWGFIPLPWRM.

Topologically, residues 1 to 12 (MGLRFQQLKKLW) are cytoplasmic. The helical; Signal-anchor for type II membrane protein transmembrane segment at 13-35 (LLYLFLLFFAFFMFAISINLYVA) threads the bilayer. At 36–667 (SIQGGDAEMR…WGFIPLPWRM (632 aa)) the chain is on the lumenal side. Asn-75 and Asn-129 each carry an N-linked (GlcNAc...) asparagine glycan. Cystine bridges form between Cys-140/Cys-375, Cys-366/Cys-446, Cys-526/Cys-547, Cys-572/Cys-601, and Cys-626/Cys-649. Residues 149–259 (LPSTSVIIVF…RGWLEPLLSR (111 aa)) form a catalytic subdomain A region. Residues Asp-190 and Arg-220 each coordinate substrate. 2 residues coordinate Mn(2+): Asp-243 and His-245. Asn-279 and Asn-313 each carry an N-linked (GlcNAc...) asparagine glycan. Residues 321–383 (PIATPGMAGG…PCSHVGHVFR (63 aa)) are catalytic subdomain B. Substrate is bound at residue Trp-352. Residue His-380 participates in Mn(2+) binding. Residues Arg-383 and Tyr-388 each coordinate substrate. N-linked (GlcNAc...) asparagine glycosylation occurs at Asn-433. Residues 513–661 (EELMALIDLE…KDITQKWGFI (149 aa)) enclose the Ricin B-type lectin domain. An N-linked (GlcNAc...) asparagine glycan is attached at Asn-590.

The protein belongs to the glycosyltransferase 2 family. GalNAc-T subfamily. Mn(2+) is required as a cofactor. Expressed in developing oocytes and egg chambers. During embryonic stages 9-11, expressed in the primordiums of the foregut, midgut and hindgut. During embryonic stages 12-13, expression is found uniquely in the posterior spiracle. During embryonic stages 14-17, expressed in the pharynx, esophagus and posterior spiracles. Expression observed in the epidermis during embryonic stages 16-17. In third instar larvae, expressed ubiquitously in wing, with increased expression in pleura and notum, eye-antennal, leg and haltere imaginal disks.

The protein localises to the golgi apparatus membrane. The enzyme catalyses L-seryl-[protein] + UDP-N-acetyl-alpha-D-galactosamine = a 3-O-[N-acetyl-alpha-D-galactosaminyl]-L-seryl-[protein] + UDP + H(+). The catalysed reaction is L-threonyl-[protein] + UDP-N-acetyl-alpha-D-galactosamine = a 3-O-[N-acetyl-alpha-D-galactosaminyl]-L-threonyl-[protein] + UDP + H(+). The protein operates within protein modification; protein glycosylation. In terms of biological role, catalyzes the initial reaction in O-linked oligosaccharide biosynthesis, the transfer of an N-acetyl-D-galactosamine residue to a serine or threonine residue on the protein receptor. It can both act as a peptide transferase that transfers GalNAc onto unmodified peptide substrates, and as a glycopeptide transferase that requires the prior addition of a GalNAc on a peptide before adding additional GalNAc moieties. Prefers EA2 as substrate. Has weak activity toward Muc5AC-3, -13 and -3/13 substrates. Plays a critical role in the regulation of integrin-mediated cell adhesion during wing development by influencing, via glycosylation, the secretion and localization of the integrin ligand Tig to the basal cell layer interface. Might have a role in protein O-glycosylation in the Golgi and thereby in establishing and/or maintaining a proper secretory apparatus structure. Together with Pgant35A, regulates integrin levels and activity-dependent integrin signaling at the synapse in neurons and muscles. The sequence is that of Polypeptide N-acetylgalactosaminyltransferase 3 from Drosophila melanogaster (Fruit fly).